We begin with the raw amino-acid sequence, 216 residues long: Sperm microtubule inner protein 8 (216 aa).

As to quaternary structure, microtubule inner protein component of sperm flagellar doublet microtubules.

Its subcellular location is the cytoplasm. The protein resides in the cytoskeleton. The protein localises to the flagellum axoneme. In terms of biological role, microtubule inner protein (MIP) part of the dynein-decorated doublet microtubules (DMTs) in flagellum axoneme. May serve to reinforce and thus stabilize the microtubule structure in the sperm flagella. This Rattus norvegicus (Rat) protein is Sperm microtubule inner protein 8 (Spmip8).